The following is a 362-amino-acid chain: RNA-binding protein 48 (362 aa).

The RRM domain maps to 46–124; that stretch reads WYLLIQGVPA…GLLHVCYAPE (79 aa). Residues 334-362 are disordered; it reads EVISSVPKPPEDKVEDVHRSRPLKQRRRI. A compositionally biased stretch (basic and acidic residues) spans 342–352; it reads PPEDKVEDVHR. The segment covering 353 to 362 has biased composition (basic residues); the sequence is SRPLKQRRRI.

It belongs to the RBM48 family. As to quaternary structure, component of the minor spliceosome. Within this complex, interacts with ARMC7 and PRPF8/PRP8.

In terms of biological role, as a component of the minor spliceosome, involved in the splicing of U12-type introns in pre-mRNAs. The sequence is that of RNA-binding protein 48 (RBM48) from Bos taurus (Bovine).